Reading from the N-terminus, the 468-residue chain is UDP-N-acetylmuramoylalanine--D-glutamate ligase (468 aa).

127 to 133 contributes to the ATP binding site; sequence GTNGKTT.

The protein belongs to the MurCDEF family.

It is found in the cytoplasm. It carries out the reaction UDP-N-acetyl-alpha-D-muramoyl-L-alanine + D-glutamate + ATP = UDP-N-acetyl-alpha-D-muramoyl-L-alanyl-D-glutamate + ADP + phosphate + H(+). Its pathway is cell wall biogenesis; peptidoglycan biosynthesis. In terms of biological role, cell wall formation. Catalyzes the addition of glutamate to the nucleotide precursor UDP-N-acetylmuramoyl-L-alanine (UMA). This chain is UDP-N-acetylmuramoylalanine--D-glutamate ligase, found in Prochlorococcus marinus (strain MIT 9312).